Consider the following 91-residue polypeptide: MSGVEEKVSGTTKTPADFLKSIRGRPVVVKLNSGVDYRGTLTCLDGYMNIAMEQTEEYVNGQLKNKYGDAFIRGNNVLYISTVNMTVADGA.

A Sm domain is found at 14–86 (TPADFLKSIR…VLYISTVNMT (73 aa)).

The protein belongs to the snRNP Sm proteins family. As to quaternary structure, component of the heptameric LSM1-LSM7 complex that forms a seven-membered ring structure with a donut shape. The LSM subunits are arranged in the order LSM1, LSM2, LSM3, LSM6, LSM5, LSM7 and LSM4. Component of the heptameric LSM2-LSM8 complex that forms a seven-membered ring structure with a donut shape. The LSM subunits are arranged in the order LSM8, LSM2, LSM3, LSM6, LSM5, LSM7 and LSM4. LSM6A subunit interacts only with its two neighboring subunits, LSM3A or LSM3B and LSM5. In terms of tissue distribution, expressed in roots, leaves, stems, flowers and siliques.

Its subcellular location is the cytoplasm. The protein localises to the nucleus. Component of LSM protein complexes, which are involved in RNA processing. Component of the cytoplasmic LSM1-LSM7 complex which is involved in mRNA degradation by promoting decapping and leading to accurate 5'-3' mRNA decay. The cytoplasmic LSM1-LSM7 complex regulates developmental gene expression by the decapping of specific development-related transcripts. Component of the nuclear LSM2-LSM8 complex which is involved splicing nuclear mRNAs. LSM2-LSM8 binds directly to the U6 small nuclear RNAs (snRNAs) and is essential for accurate splicing of selected development-related mRNAs through the stabilization of the spliceosomal U6 snRNA. Plays a critical role in the regulation of development-related gene expression. This Arabidopsis thaliana (Mouse-ear cress) protein is Sm-like protein LSM6A.